Reading from the N-terminus, the 310-residue chain is Collagen-like protein V6 (310 aa).

Polar residues predominate over residues 1 to 41 (MSLSTLFSPNTYNINSKSQTLNNLPSNPTSQTNTLWSNNAY). The segment at 1–183 (MSLSTLFSPN…GDPGAKGDPG (183 aa)) is disordered. 2 consecutive Collagen-like domains span residues 61 to 119 (GQKG…KGQA) and 123 to 182 (GLKG…KGDP). Basic and acidic residues predominate over residues 92–101 (SGDKGDKGDS). 2 N-linked (GlcNAc...) asparagine; by host glycosylation sites follow: Asn-227 and Asn-264.

It belongs to the sputnik virus V6 family.

The polypeptide is Collagen-like protein V6 (Sputnik virophage).